A 308-amino-acid polypeptide reads, in one-letter code: Homoserine kinase (308 aa).

95–105 (PQSRGLGSSAA) is an ATP binding site.

This sequence belongs to the GHMP kinase family. Homoserine kinase subfamily.

The protein localises to the cytoplasm. It carries out the reaction L-homoserine + ATP = O-phospho-L-homoserine + ADP + H(+). It functions in the pathway amino-acid biosynthesis; L-threonine biosynthesis; L-threonine from L-aspartate: step 4/5. Its function is as follows. Catalyzes the ATP-dependent phosphorylation of L-homoserine to L-homoserine phosphate. This is Homoserine kinase from Corynebacterium jeikeium (strain K411).